Reading from the N-terminus, the 307-residue chain is Putative serpin A13 (307 aa).

A signal peptide spans Met1–Ala21. N-linked (GlcNAc...) asparagine glycans are attached at residues Asn150 and Asn250.

The protein belongs to the serpin family.

It is found in the secreted. The protein is Putative serpin A13 (SERPINA13P) of Homo sapiens (Human).